The chain runs to 320 residues: L-lactate dehydrogenase (320 aa).

Residues Val-18, Asp-39, Arg-44, Tyr-69, and 83 to 84 (GA) contribute to the NAD(+) site. Substrate contacts are provided by Gln-86 and Arg-92. NAD(+) contacts are provided by residues Ser-105, 122–124 (AAN), and Ser-147. Substrate is bound at residue 124 to 127 (NPVD). 152–155 (DSSR) serves as a coordination point for substrate. His-179 (proton acceptor) is an active-site residue. Tyr-223 is subject to Phosphotyrosine. Residue Thr-232 coordinates substrate.

It belongs to the LDH/MDH superfamily. LDH family. Homotetramer.

It is found in the cytoplasm. The catalysed reaction is (S)-lactate + NAD(+) = pyruvate + NADH + H(+). Its pathway is fermentation; pyruvate fermentation to lactate; (S)-lactate from pyruvate: step 1/1. The quaternary structure is constitutionally similar to the active conformation of allosteric LDHs, and the regulation is independent of the fructose 1,6-bisphosphate-binding site. In terms of biological role, catalyzes the conversion of lactate to pyruvate. The sequence is that of L-lactate dehydrogenase from Lactiplantibacillus pentosus (Lactobacillus pentosus).